The primary structure comprises 434 residues: Anaerobic glycerol-3-phosphate dehydrogenase subunit B (434 aa).

It belongs to the anaerobic G-3-P dehydrogenase subunit B family. As to quaternary structure, composed of a catalytic GlpA/B dimer and of membrane bound GlpC. FMN serves as cofactor.

It catalyses the reaction a quinone + sn-glycerol 3-phosphate = dihydroxyacetone phosphate + a quinol. It functions in the pathway polyol metabolism; glycerol degradation via glycerol kinase pathway; glycerone phosphate from sn-glycerol 3-phosphate (anaerobic route): step 1/1. Conversion of glycerol 3-phosphate to dihydroxyacetone. Uses fumarate or nitrate as electron acceptor. The protein is Anaerobic glycerol-3-phosphate dehydrogenase subunit B of Histophilus somni (strain 2336) (Haemophilus somnus).